The chain runs to 451 residues: Medium-chain fatty acid ethyl ester synthase/esterase 2 (451 aa).

A Glycyl lysine isopeptide (Lys-Gly) (interchain with G-Cter in ubiquitin) cross-link involves residue Lys-114. In terms of domain architecture, AB hydrolase-1 spans 166-430 (PLVVILHGLA…GGHLAYLDKD (265 aa)). Residues Ser-247, Asp-395, and His-423 each act as charge relay system in the active site.

Belongs to the AB hydrolase superfamily. AB hydrolase 4 family.

It catalyses the reaction an aliphatic alcohol + acetyl-CoA = an acetyl ester + CoA. Its function is as follows. Displays enzymatic activity both for medium-chain fatty acid (MCFA) ethyl ester synthesis and hydrolysis (esterase activity). MCFA are toxic for yeast and this enzyme could thus be involved in their detoxification by esterification. The sequence is that of Medium-chain fatty acid ethyl ester synthase/esterase 2 (EHT1) from Saccharomyces cerevisiae (strain ATCC 204508 / S288c) (Baker's yeast).